Consider the following 335-residue polypeptide: MKTLGEFIVEKQQDFPHATGELTALLSAIKLGAKIIHRDINKAGLVDILGTNGVSNVQGEAQMKLDLYANEKLKAALKARGEVAGIGSEEEDDIVIFEGDRAENAKYVVLMDPLDGSSNIDVNVSVGTIFSIYHRITPIGQPVTLDDFLQPGNRQVAAGYVVYGSSTMLVYTTGCGVHAFTYDPSLGVFCLSHESVHFPPTGNMYSINEGNYIKFPLGVKKYIKYCQEQDATTNRPYTTRYIGSLVADFHRNLLKGGIYIYPSTASHPNGKLRLLYECNPMAFLAEQAGGKASNGKDRILDIKPTELHQRMPFFVGTKAMVEQAEAFMAQYPDEE.

Mg(2+) contacts are provided by E89, D112, L114, and D115. Substrate contacts are provided by residues 115 to 118 (DGSS), N208, Y241, and K271. E277 lines the Mg(2+) pocket.

The protein belongs to the FBPase class 1 family. Homotetramer. Mg(2+) is required as a cofactor.

The protein resides in the cytoplasm. The catalysed reaction is beta-D-fructose 1,6-bisphosphate + H2O = beta-D-fructose 6-phosphate + phosphate. The protein operates within carbohydrate biosynthesis; gluconeogenesis. The protein is Fructose-1,6-bisphosphatase class 1 of Proteus mirabilis (strain HI4320).